The primary structure comprises 66 residues: COP-associated protein (66 aa).

Positions 1 to 66 constitute an HMA domain; sequence MKATFQVPSI…ALLDAGQEVV (66 aa). The Cu cation site is built by Cys-12 and Cys-15. Residues Cys-12 and Cys-15 are joined by a disulfide bond.

Part of a cation-transporting system which is associated with copper export out of the H.pylori cells. In Helicobacter pylori (strain ATCC 700392 / 26695) (Campylobacter pylori), this protein is COP-associated protein (copP).